The chain runs to 369 residues: MFTALEKVVDTLRLRIFCFSACCNEVNASKKKGKKMSANEIKNQLHVMHDPFSDKTSQPKIPDGKANESLGFATQTVQEVGNAEGANTMHILLFPGQNSGILIDETAQADLGSRTYYIPTFFGSNGLDWDDLADATTAANVRGLDNYALWRVVSTGLQLKLLNPVDQDDGWWESVRVTTENTNVDWYLTTGNNSTQPGGNNGTIAPVGLINSLLSQQTLANEQSYSTGLLRDLHRVQFECHGQRDYHDFIQQRNEIRLAGAAISAVDKTTNYEAQFSLGHDDANDVINQFVDRSYDMVYIRLHCRQNTGTTPFLGSRFHLNCVSNQEVIFDHEERESRFHTRSHTIGSNANSVHMQARRADQNAAKMTM.

The protein localises to the host nucleus. Its subcellular location is the virion. Its function is as follows. Self-assembles to form the virion icosahedral capsid. The protein is Capsid protein of Avon-Heathcote Estuary associated kieseladnavirus (AHEaBV).